The primary structure comprises 147 residues: Deoxyuridine 5'-triphosphate nucleotidohydrolase (147 aa).

Residues 67 to 69 (RSG), asparagine 80, and 84 to 86 (TID) each bind substrate.

This sequence belongs to the dUTPase family. Mg(2+) is required as a cofactor.

The catalysed reaction is dUTP + H2O = dUMP + diphosphate + H(+). Its pathway is pyrimidine metabolism; dUMP biosynthesis; dUMP from dCTP (dUTP route): step 2/2. In terms of biological role, this enzyme is involved in nucleotide metabolism: it produces dUMP, the immediate precursor of thymidine nucleotides and it decreases the intracellular concentration of dUTP so that uracil cannot be incorporated into DNA. The sequence is that of Deoxyuridine 5'-triphosphate nucleotidohydrolase from Anaeromyxobacter dehalogenans (strain 2CP-C).